We begin with the raw amino-acid sequence, 1056 residues long: Kinesin-like protein KIF11 (1056 aa).

In terms of domain architecture, Kinesin motor spans asparagine 18–isoleucine 359. Glycine 105 to threonine 112 contributes to the ATP binding site. An N6-acetyllysine modification is found at lysine 146. Coiled-coil stretches lie at residues glutamate 364 to tyrosine 480 and leucine 736 to asparagine 763. Threonine 458 is subject to Phosphothreonine. Residue lysine 477 forms a Glycyl lysine isopeptide (Lys-Gly) (interchain with G-Cter in SUMO2) linkage. Threonine 925 bears the Phosphothreonine mark. Threonine 926 is subject to Phosphothreonine; by CDK1. The residue at position 1033 (serine 1033) is a Phosphoserine; by NEK6. Lysine 1034 is covalently cross-linked (Glycyl lysine isopeptide (Lys-Gly) (interchain with G-Cter in ubiquitin)).

It belongs to the TRAFAC class myosin-kinesin ATPase superfamily. Kinesin family. BimC subfamily. Interacts with the thyroid hormone receptor in the presence of thyroid hormone. Component of a large chromatin remodeling complex, at least composed of MYSM1, PCAF, RBM10 and KIF11/TRIP5. Interacts (via C-terminus) with the kinase NEK6 in both interphase and mitosis. Interacts with RARRES1 and AGBL2. Interacts with TPX2. In terms of processing, phosphorylated exclusively on serine during S phase, but on both serine and Thr-926 during mitosis, so controlling the association of KIF11 with the spindle apparatus (probably during early prophase). Post-translationally, a subset of this protein primarily localized at the spindle pole is phosphorylated by NEK6 during mitosis; phosphorylation is required for mitotic function. Ubiquitinated at Lys-1034 by UHRF1 via 'Lys-63'-linked ubiquitin chains, leading to interaction with spindle assembly factor TPX2, thereby ensuring accurate distribution to the spindles during metaphase.

The protein resides in the cytoplasm. It is found in the cytoskeleton. The protein localises to the spindle pole. Its function is as follows. Motor protein required for establishing a bipolar spindle and thus contributing to chromosome congression during mitosis. Required in non-mitotic cells for transport of secretory proteins from the Golgi complex to the cell surface. This chain is Kinesin-like protein KIF11 (KIF11), found in Homo sapiens (Human).